Here is a 667-residue protein sequence, read N- to C-terminus: Leucine zipper putative tumor suppressor 2 (667 aa).

The segment covering 1-25 has biased composition (low complexity); the sequence is MAIVQTLPVPLEPAPEAATAQQAPA. 3 disordered regions span residues 1 to 132, 150 to 325, and 516 to 541; these read MAIV…PVSG, PVLP…DEAL, and QEAE…PPVP. A required for centrosomal localization region spans residues 1–333; sequence MAIVQTLPVP…ALLHCVLEGK (333 aa). Over residues 172–181 the composition is skewed to polar residues; it reads PSGSQGSLTQ. Residues 187–198 show a composition bias toward low complexity; it reads ASSSSSSSSSAA. Positions 212-232 are enriched in polar residues; the sequence is PSGTLSDSGRNSLSSLPTYST. Over residues 241–282 the composition is skewed to low complexity; it reads SPGGHLPSHGPGRGALPGPARGAPTGPSHSDSGRSSSSKSTG. S248 bears the Phosphoserine mark. Over residues 283 to 294 the composition is skewed to gly residues; that stretch reads SLGGRLAGGLLG. At S295 the chain carries Phosphoserine. Residues 310–321 are compositionally biased toward pro residues; sequence SPPPPPPPPPPS. Residues 329–647 are a coiled coil; the sequence is VLEGKLRDRE…LELEARELAD (319 aa). The segment at 445 to 667 is sufficient for interaction with CTNNB1; it reads SGEISLLKQQ…CLEEITATEI (223 aa). The segment at 448–667 is sufficient for interaction with KATNB1 and for inhibition of katanin-mediated microtubule severing; it reads ISLLKQQLKE…CLEEITATEI (220 aa). Residues 516–526 are compositionally biased toward basic and acidic residues; it reads QEAERLREKAG. Position 568 is a phosphoserine (S568). A Nuclear export signal motif is present at residues 629–638; that stretch reads LEQELQQLSL.

Belongs to the LZTS2 family. In terms of assembly, interacts with KATNB1. Also interacts with CTNNB1, gamma-tubulin and KIF23.

The protein localises to the cytoplasm. Its subcellular location is the cytoskeleton. The protein resides in the microtubule organizing center. It localises to the centrosome. In terms of biological role, negative regulator of katanin-mediated microtubule severing and release from the centrosome. Required for central spindle formation and the completion of cytokinesis. May negatively regulate axonal outgrowth by preventing the formation of microtubule bundles that are necessary for transport within the elongating axon. Negative regulator of the Wnt signaling pathway. Represses beta-catenin-mediated transcriptional activation by promoting the nuclear exclusion of beta-catenin. In Bos taurus (Bovine), this protein is Leucine zipper putative tumor suppressor 2.